A 1433-amino-acid chain; its full sequence is DNA-directed RNA polymerase subunit beta' (1433 aa).

Residues cysteine 66, cysteine 68, cysteine 81, and cysteine 84 each contribute to the Zn(2+) site. Residues aspartate 473, aspartate 475, and aspartate 477 each contribute to the Mg(2+) site. The Zn(2+) site is built by cysteine 815, cysteine 889, cysteine 896, and cysteine 899.

The protein belongs to the RNA polymerase beta' chain family. In terms of assembly, the RNAP catalytic core consists of 2 alpha, 1 beta, 1 beta' and 1 omega subunit. When a sigma factor is associated with the core the holoenzyme is formed, which can initiate transcription. Mg(2+) is required as a cofactor. Zn(2+) serves as cofactor.

The enzyme catalyses RNA(n) + a ribonucleoside 5'-triphosphate = RNA(n+1) + diphosphate. DNA-dependent RNA polymerase catalyzes the transcription of DNA into RNA using the four ribonucleoside triphosphates as substrates. The chain is DNA-directed RNA polymerase subunit beta' from Porphyromonas gingivalis (strain ATCC 33277 / DSM 20709 / CIP 103683 / JCM 12257 / NCTC 11834 / 2561).